Here is a 118-residue protein sequence, read N- to C-terminus: Large ribosomal subunit protein uL18 (118 aa).

This sequence belongs to the universal ribosomal protein uL18 family. Part of the 50S ribosomal subunit; part of the 5S rRNA/L5/L18/L25 subcomplex. Contacts the 5S and 23S rRNAs.

Functionally, this is one of the proteins that bind and probably mediate the attachment of the 5S RNA into the large ribosomal subunit, where it forms part of the central protuberance. This chain is Large ribosomal subunit protein uL18, found in Dechloromonas aromatica (strain RCB).